A 310-amino-acid polypeptide reads, in one-letter code: UDP-N-acetylenolpyruvoylglucosamine reductase (310 aa).

An FAD-binding PCMH-type domain is found at 31 to 216; that stretch reads KIGGPADYFV…LRKIEELNQA (186 aa). Residue Arg180 is part of the active site. Ser230 serves as the catalytic Proton donor. Residue Glu300 is part of the active site.

It belongs to the MurB family. The cofactor is FAD.

Its subcellular location is the cytoplasm. It catalyses the reaction UDP-N-acetyl-alpha-D-muramate + NADP(+) = UDP-N-acetyl-3-O-(1-carboxyvinyl)-alpha-D-glucosamine + NADPH + H(+). It functions in the pathway cell wall biogenesis; peptidoglycan biosynthesis. Cell wall formation. This Lachnoclostridium phytofermentans (strain ATCC 700394 / DSM 18823 / ISDg) (Clostridium phytofermentans) protein is UDP-N-acetylenolpyruvoylglucosamine reductase.